Reading from the N-terminus, the 489-residue chain is Mitochondrial-processing peptidase subunit beta (489 aa).

A mitochondrion-targeting transit peptide spans 1–43 (MAAAAARVVLSSAARRRLWGFSESLLIRGAAGRSLYFGENRLR). Residue His101 coordinates Zn(2+). The active-site Proton acceptor is the Glu104. The Zn(2+) site is built by His105 and Glu181.

Belongs to the peptidase M16 family. Heterodimer of PMPCA (alpha) and PMPCB (beta) subunits, forming the mitochondrial processing protease (MPP) in which PMPCA is involved in substrate recognition and binding and PMPCB is the catalytic subunit. Zn(2+) is required as a cofactor.

The protein resides in the mitochondrion matrix. The enzyme catalyses Release of N-terminal transit peptides from precursor proteins imported into the mitochondrion, typically with Arg in position P2.. With respect to regulation, binding to PMPCA is required for catalytic activity. Functionally, catalytic subunit of the essential mitochondrial processing protease (MPP), which cleaves the mitochondrial sequence off newly imported precursors proteins. Preferentially, cleaves after an arginine at position P2. Required for PINK1 turnover by coupling PINK1 mitochondrial import and cleavage, which results in subsequent PINK1 proteolysis. The sequence is that of Mitochondrial-processing peptidase subunit beta (PMPCB) from Homo sapiens (Human).